The sequence spans 876 residues: Radial spoke head 10 homolog B (876 aa).

Composition is skewed to basic and acidic residues over residues 1–16 and 57–66; these read MVKE…DKSA and PKRDSEHTYQ. The tract at residues 1–72 is disordered; it reads MVKEKKKADK…HTYQSEDETQ (72 aa). 10 MORN repeats span residues 86–108, 109–131, 132–154, 155–177, 179–201, 204–226, 227–249, 251–273, 284–306, and 307–329; these read YEGE…GGNT, YHGM…DGLK, YEGD…DGST, YEGE…TQPV, YIGH…QEGT, YEGD…SGNI, YEGQ…TTNE, YTGH…LKRI, YIGA…SGAM, and YEGE…NGRV. 2 disordered regions span residues 360–386 and 841–876; these read SQRS…LDGS and EPPE…KKKK. Over residues 373 to 386 the composition is skewed to basic and acidic residues; that stretch reads ADREPETLRKLDGS. The stretch at 752–841 forms a coiled coil; that stretch reads EKYEKSKDEQ…FELDITVLKE (90 aa).

Interacts with RSPH6A. Does not appear to be part of the axonemal radial spoke complexes 1 or 2.

Its subcellular location is the cytoplasm. The protein localises to the cytoskeleton. It localises to the cilium axoneme. The protein resides in the cell projection. It is found in the cilium. Its subcellular location is the flagellum. Its function is as follows. May function as part of the axonemal radial spoke complex 3 (RS3). Radial spoke complexes are important for ciliary motility. In Rattus norvegicus (Rat), this protein is Radial spoke head 10 homolog B (Rsph10b).